Here is a 523-residue protein sequence, read N- to C-terminus: MRDTVDPVFSLGISSLWDELRHMPTGGVWWVNADRQQDAISLVNQTIASQTENANVAVIGMEGDPGKVIKLDESHGPEKIRLFTMPASEKGLYSLPHDLLCSVNPTHYFFILICANNTWRNITSESLHKWLEKMNKWTRFHHCSLLVINPCNNSDKQSSLLMGEYRSLFGLASLRFQGDQHLFDIAFWCNEKGVSARQQLLLCQQDERWTLSHQEETAIQPRSDEKRILSHVAVLEGAPPLSEHWTLFDNNEALFNDARTAQAATIIFSLTQNNQIEPLARRIHTLRRQRGSALKIVVRENIASLRATDERLLLGCGANMIIPWNAPLSRCLTLIESVQGQQFSRYVPEDITTLLSMTQPLKLRGFQPWDTFCDAIHTMMSNTLLPADGKGVLVALRPVPGIRVEQALTLCRPNRTGDIMTIGGNRLVLFLSFCRVNDLDTALNHIFPLPTGDIFSNRMVWFEDKQISAELVQMRLLSPELWGTPLPLAKRADPVINAEHDGRIWRRIPEPLRLLDDTAERAS.

The protein belongs to the BcsE family.

Its function is as follows. Required for cellulose biosynthesis. May have protease activity, but BcsA is not targeted. Binds bis-(3'-5') cyclic diguanylic acid (c-di-GMP). This Salmonella typhimurium (strain LT2 / SGSC1412 / ATCC 700720) protein is Cyclic di-GMP binding protein BcsE.